Here is a 66-residue protein sequence, read N- to C-terminus: uncharacterized protein (66 aa).

Positions 1–18 (MSTTSSSSTFSTRTASLS) are enriched in low complexity. Positions 1 to 22 (MSTTSSSSTFSTRTASLSQSYT) are disordered.

This is an uncharacterized protein from Schizosaccharomyces pombe (strain 972 / ATCC 24843) (Fission yeast).